A 578-amino-acid polypeptide reads, in one-letter code: Triokinase/FMN cyclase (578 aa).

Residues 9-336 (SVEGCAGDAL…IDAETNAKAW (328 aa)) form the DhaK domain. Residues 56–59 (GSGH), K109, and D114 contribute to the dihydroxyacetone site. Residue H221 is the Tele-hemiaminal-histidine intermediate of the active site. A DhaL domain is found at 372 to 571 (KQMTLVLDRI…AAAIFRAILE (200 aa)). ATP-binding positions include 401–404 (DGDC), 446–447 (SS), G486, and 494–495 (TM). 2 positions are modified to phosphoserine: S511 and S545. Residue 556–558 (DPG) coordinates ATP.

This sequence belongs to the dihydroxyacetone kinase (DAK) family. Homodimer. Interacts with IFIH1 (via the CARD domains), the interaction is inhibited by viral infection. Mg(2+) is required as a cofactor. Mn(2+) serves as cofactor. The cofactor is Co(2+).

The enzyme catalyses dihydroxyacetone + ATP = dihydroxyacetone phosphate + ADP + H(+). It carries out the reaction D-glyceraldehyde + ATP = D-glyceraldehyde 3-phosphate + ADP + H(+). It catalyses the reaction FAD = riboflavin cyclic-4',5'-phosphate + AMP + H(+). With respect to regulation, each activity is inhibited by the substrate(s) of the other. Catalyzes both the phosphorylation of dihydroxyacetone and of glyceraldehyde, and the splitting of ribonucleoside diphosphate-X compounds among which FAD is the best substrate. Represses IFIH1-mediated cellular antiviral response. In Rattus norvegicus (Rat), this protein is Triokinase/FMN cyclase (Tkfc).